Consider the following 289-residue polypeptide: Syntaxin-2 (289 aa).

Residues 1–265 (MRDRLPDLTA…KYQSKARRKK (265 aa)) are Cytoplasmic-facing. A coiled-coil region spans residues 68-101 (EGKIKEELEDLDKEIKKTANRIRGKLKSIEQSCD). In terms of domain architecture, t-SNARE coiled-coil homology spans 192–254 (LNEIESRHKD…EHAKEETKKA (63 aa)). Residues 266-289 (WIIAAVAVAVIAVLALIIGLSVGK) form a helical; Anchor for type IV membrane protein membrane-spanning segment.

This sequence belongs to the syntaxin family. Interacts with SYT6 and SYT8; the interaction is Ca(2+)-dependent.

The protein resides in the membrane. In terms of biological role, essential for epithelial morphogenesis. May mediate Ca(2+)-regulation of exocytosis acrosomal reaction in sperm. The protein is Syntaxin-2 (Stx2) of Mus musculus (Mouse).